The primary structure comprises 102 residues: Small ribosomal subunit protein uS10 (102 aa).

Belongs to the universal ribosomal protein uS10 family. As to quaternary structure, part of the 30S ribosomal subunit.

Its function is as follows. Involved in the binding of tRNA to the ribosomes. The protein is Small ribosomal subunit protein uS10 of Listeria innocua serovar 6a (strain ATCC BAA-680 / CLIP 11262).